The chain runs to 97 residues: Small ribosomal subunit protein bS20 (97 aa).

The protein belongs to the bacterial ribosomal protein bS20 family.

Its function is as follows. Binds directly to 16S ribosomal RNA. The sequence is that of Small ribosomal subunit protein bS20 from Prochlorococcus marinus (strain AS9601).